The primary structure comprises 82 residues: Conotoxin Tx6.6 (82 aa).

Positions M1–L19 are cleaved as a signal peptide. Positions V20–K51 are excised as a propeptide. Disulfide bonds link C53–C71, C60–C76, and C70–C81. At A82 the chain carries Alanine amide; partial.

This sequence belongs to the O1 superfamily. As to expression, expressed by the venom duct.

The protein localises to the secreted. Omega-conotoxins act at presynaptic membranes, they bind and block voltage-gated calcium channels (Cav). This Conus textile (Cloth-of-gold cone) protein is Conotoxin Tx6.6.